The sequence spans 550 residues: Hydroxylamine reductase (550 aa).

Residues C3, C6, C18, and C25 each contribute to the [2Fe-2S] cluster site. Residues H249, E273, C317, C405, C433, C458, E492, and K494 each coordinate hybrid [4Fe-2O-2S] cluster. C405 is modified (cysteine persulfide).

Belongs to the HCP family. [2Fe-2S] cluster serves as cofactor. The cofactor is hybrid [4Fe-2O-2S] cluster.

It is found in the cytoplasm. The catalysed reaction is A + NH4(+) + H2O = hydroxylamine + AH2 + H(+). Catalyzes the reduction of hydroxylamine to form NH(3) and H(2)O. The sequence is that of Hydroxylamine reductase from Salmonella dublin (strain CT_02021853).